Here is a 46-residue protein sequence, read N- to C-terminus: uncharacterized protein (46 aa).

It localises to the mitochondrion. This is an uncharacterized protein from Saccharomyces cerevisiae (strain ATCC 204508 / S288c) (Baker's yeast).